Reading from the N-terminus, the 612-residue chain is Dihydroxy-acid dehydratase (612 aa).

Aspartate 81 is a Mg(2+) binding site. A [2Fe-2S] cluster-binding site is contributed by cysteine 122. Residues aspartate 123 and lysine 124 each contribute to the Mg(2+) site. An N6-carboxylysine modification is found at lysine 124. Cysteine 193 provides a ligand contact to [2Fe-2S] cluster. A Mg(2+)-binding site is contributed by glutamate 489. Residue serine 515 is the Proton acceptor of the active site.

The protein belongs to the IlvD/Edd family. As to quaternary structure, homodimer. Requires [2Fe-2S] cluster as cofactor. Mg(2+) serves as cofactor.

The enzyme catalyses (2R)-2,3-dihydroxy-3-methylbutanoate = 3-methyl-2-oxobutanoate + H2O. It carries out the reaction (2R,3R)-2,3-dihydroxy-3-methylpentanoate = (S)-3-methyl-2-oxopentanoate + H2O. It participates in amino-acid biosynthesis; L-isoleucine biosynthesis; L-isoleucine from 2-oxobutanoate: step 3/4. Its pathway is amino-acid biosynthesis; L-valine biosynthesis; L-valine from pyruvate: step 3/4. Functionally, functions in the biosynthesis of branched-chain amino acids. Catalyzes the dehydration of (2R,3R)-2,3-dihydroxy-3-methylpentanoate (2,3-dihydroxy-3-methylvalerate) into 2-oxo-3-methylpentanoate (2-oxo-3-methylvalerate) and of (2R)-2,3-dihydroxy-3-methylbutanoate (2,3-dihydroxyisovalerate) into 2-oxo-3-methylbutanoate (2-oxoisovalerate), the penultimate precursor to L-isoleucine and L-valine, respectively. This chain is Dihydroxy-acid dehydratase, found in Xanthomonas campestris pv. campestris (strain B100).